The following is a 92-amino-acid chain: Promotilin (92 aa).

Residues 12–49 are disordered; the sequence is RMQEKERNRGQKKSLGLQQRSEEVGSLDPTEAAEEEGK.

This sequence belongs to the motilin family.

It is found in the secreted. Functionally, plays an important role in the regulation of interdigestive gastrointestinal motility and indirectly causes rhythmic contraction of duodenal and colonic smooth muscle. The chain is Promotilin (MLN) from Equus caballus (Horse).